The following is a 128-amino-acid chain: Small ribosomal subunit protein uS11 (128 aa).

Belongs to the universal ribosomal protein uS11 family. Part of the 30S ribosomal subunit. Interacts with proteins S7 and S18. Binds to IF-3.

In terms of biological role, located on the platform of the 30S subunit, it bridges several disparate RNA helices of the 16S rRNA. Forms part of the Shine-Dalgarno cleft in the 70S ribosome. This chain is Small ribosomal subunit protein uS11, found in Leuconostoc mesenteroides subsp. mesenteroides (strain ATCC 8293 / DSM 20343 / BCRC 11652 / CCM 1803 / JCM 6124 / NCDO 523 / NBRC 100496 / NCIMB 8023 / NCTC 12954 / NRRL B-1118 / 37Y).